A 166-amino-acid chain; its full sequence is Protein-export protein SecB (166 aa).

It belongs to the SecB family. As to quaternary structure, homotetramer, a dimer of dimers. One homotetramer interacts with 1 SecA dimer.

Its subcellular location is the cytoplasm. Functionally, one of the proteins required for the normal export of preproteins out of the cell cytoplasm. It is a molecular chaperone that binds to a subset of precursor proteins, maintaining them in a translocation-competent state. It also specifically binds to its receptor SecA. In Acidiphilium cryptum (strain JF-5), this protein is Protein-export protein SecB.